We begin with the raw amino-acid sequence, 101 residues long: DET1- and DDB1-associated protein 1 (101 aa).

The segment at 67-101 (NAAKKRDQDQLEIGETSAPPRKIARTDSQEMNEDT) is disordered.

Belongs to the DDA1 family. As to quaternary structure, component of numerous DCX (DDB1-CUL4-X-box) E3 ubiquitin-protein ligase complexes which consist of a core of DDB1, cullin-4 (CUL4A or CUL4B), DDA1 and RBX1.

Its pathway is protein modification; protein ubiquitination. Functionally, functions as a component of numerous distinct DCX (DDB1-CUL4-X-box) E3 ubiquitin-protein ligase complexes which mediate the ubiquitination and subsequent proteasomal degradation of target proteins. In the DCX complexes, acts as a scaffolding subunit required to stabilize the complex. This Xenopus laevis (African clawed frog) protein is DET1- and DDB1-associated protein 1.